A 470-amino-acid polypeptide reads, in one-letter code: Sorting nexin-17 (470 aa).

Residues 1–109 enclose the PX domain; that stretch reads MHFSIPETES…SFLRRAQQET (109 aa). The a 1,2-diacyl-sn-glycero-3-phospho-(1D-myo-inositol-3-phosphate) site is built by R36, S38, K62, and R75. Residues 115 to 206 form the Ras-associating domain; the sequence is EEVSLEVLLS…YKIVLRKSYW (92 aa). Residues 115–432 form an FERM-like region; it reads EEVSLEVLLS…DASRESMVKL (318 aa). The interval 270-432 is PTB-like F3 module; sequence GYLRFDACVA…DASRESMVKL (163 aa). Phosphoserine occurs at positions 336, 407, 409, 415, 421, 437, and 440. Residues 400 to 426 form a disordered region; it reads VGGTLRRSDSQQAVKSPPLLESPDASR.

It belongs to the sorting nexin family. Monomer. Interacts with APP (via cytoplasmic YXNPXY motif). Interacts with KIF1B. Interacts with the C-termini of P-selectin, PTC, LDLR, VLDLR, LRP1 and LRP8. Interacts with KRIT1 (via N-terminus). Interacts with HRAS. Interacts with ITGB1 and ITGB5 (via NPxY motif). Interacts with CCDC22 and CCDC93; the interaction associates SNX17 with the CCC complex. Interacts (via C-terminus) with VPS26C and VPS35L; the interactions are direct and associate SNX17 with the retriever complex.

It is found in the cytoplasm. Its subcellular location is the early endosome. It localises to the cytoplasmic vesicle membrane. In terms of biological role, critical regulator of endosomal recycling of numerous surface proteins, including integrins, signaling receptor and channels. Binds to NPxY sequences in the cytoplasmic tails of target cargos. Associates with retriever and CCC complexes to prevent lysosomal degradation and promote cell surface recycling of numerous cargos such as integrins ITGB1, ITGB5 and their associated alpha subunits. Also required for maintenance of normal cell surface levels of APP and LRP1. Interacts with membranes containing phosphatidylinositol 3-phosphate (PtdIns(3P)). This is Sorting nexin-17 (SNX17) from Bos taurus (Bovine).